Reading from the N-terminus, the 783-residue chain is DNA ligase (783 aa).

Residues 42–46 (DAEYD), 91–92 (SL), and E125 each bind NAD(+). K127 (N6-AMP-lysine intermediate) is an active-site residue. R148, E185, K302, and K326 together coordinate NAD(+). Zn(2+)-binding residues include C421, C423, C445, and C451. Positions 705–783 (KTDTAVAGKT…EDEWLELVAG (79 aa)) constitute a BRCT domain.

It belongs to the NAD-dependent DNA ligase family. LigA subfamily. Mg(2+) is required as a cofactor. The cofactor is Mn(2+).

The enzyme catalyses NAD(+) + (deoxyribonucleotide)n-3'-hydroxyl + 5'-phospho-(deoxyribonucleotide)m = (deoxyribonucleotide)n+m + AMP + beta-nicotinamide D-nucleotide.. Functionally, DNA ligase that catalyzes the formation of phosphodiester linkages between 5'-phosphoryl and 3'-hydroxyl groups in double-stranded DNA using NAD as a coenzyme and as the energy source for the reaction. It is essential for DNA replication and repair of damaged DNA. The chain is DNA ligase from Caulobacter vibrioides (strain ATCC 19089 / CIP 103742 / CB 15) (Caulobacter crescentus).